Here is a 232-residue protein sequence, read N- to C-terminus: Phosphatidylserine decarboxylase proenzyme (232 aa).

Ser190 acts as the Schiff-base intermediate with substrate; via pyruvic acid in catalysis. Ser190 is modified (pyruvic acid (Ser); by autocatalysis).

Belongs to the phosphatidylserine decarboxylase family. PSD-A subfamily. As to quaternary structure, heterodimer of a large membrane-associated beta subunit and a small pyruvoyl-containing alpha subunit. The cofactor is pyruvate. Is synthesized initially as an inactive proenzyme. Formation of the active enzyme involves a self-maturation process in which the active site pyruvoyl group is generated from an internal serine residue via an autocatalytic post-translational modification. Two non-identical subunits are generated from the proenzyme in this reaction, and the pyruvate is formed at the N-terminus of the alpha chain, which is derived from the carboxyl end of the proenzyme. The post-translation cleavage follows an unusual pathway, termed non-hydrolytic serinolysis, in which the side chain hydroxyl group of the serine supplies its oxygen atom to form the C-terminus of the beta chain, while the remainder of the serine residue undergoes an oxidative deamination to produce ammonia and the pyruvoyl prosthetic group on the alpha chain.

The protein resides in the cell membrane. It catalyses the reaction a 1,2-diacyl-sn-glycero-3-phospho-L-serine + H(+) = a 1,2-diacyl-sn-glycero-3-phosphoethanolamine + CO2. It functions in the pathway phospholipid metabolism; phosphatidylethanolamine biosynthesis; phosphatidylethanolamine from CDP-diacylglycerol: step 2/2. Its function is as follows. Catalyzes the formation of phosphatidylethanolamine (PtdEtn) from phosphatidylserine (PtdSer). The sequence is that of Phosphatidylserine decarboxylase proenzyme from Brucella anthropi (strain ATCC 49188 / DSM 6882 / CCUG 24695 / JCM 21032 / LMG 3331 / NBRC 15819 / NCTC 12168 / Alc 37) (Ochrobactrum anthropi).